Reading from the N-terminus, the 78-residue chain is Translational regulator CsrA (78 aa).

Belongs to the CsrA/RsmA family. Homodimer; the beta-strands of each monomer intercalate to form a hydrophobic core, while the alpha-helices form wings that extend away from the core.

Its subcellular location is the cytoplasm. In terms of biological role, a translational regulator that binds mRNA to regulate translation initiation and/or mRNA stability. Usually binds in the 5'-UTR at or near the Shine-Dalgarno sequence preventing ribosome-binding, thus repressing translation. Its main target seems to be the major flagellin gene, while its function is anatagonized by FliW. The chain is Translational regulator CsrA from Desulfovibrio desulfuricans (strain ATCC 27774 / DSM 6949 / MB).